The primary structure comprises 156 residues: ATP synthase subunit b (156 aa).

Residues 11–31 (AIAFAVFVWFCMKYVWPPLLA) form a helical membrane-spanning segment.

This sequence belongs to the ATPase B chain family. In terms of assembly, F-type ATPases have 2 components, F(1) - the catalytic core - and F(0) - the membrane proton channel. F(1) has five subunits: alpha(3), beta(3), gamma(1), delta(1), epsilon(1). F(0) has three main subunits: a(1), b(2) and c(10-14). The alpha and beta chains form an alternating ring which encloses part of the gamma chain. F(1) is attached to F(0) by a central stalk formed by the gamma and epsilon chains, while a peripheral stalk is formed by the delta and b chains.

Its subcellular location is the cell inner membrane. Functionally, f(1)F(0) ATP synthase produces ATP from ADP in the presence of a proton or sodium gradient. F-type ATPases consist of two structural domains, F(1) containing the extramembraneous catalytic core and F(0) containing the membrane proton channel, linked together by a central stalk and a peripheral stalk. During catalysis, ATP synthesis in the catalytic domain of F(1) is coupled via a rotary mechanism of the central stalk subunits to proton translocation. In terms of biological role, component of the F(0) channel, it forms part of the peripheral stalk, linking F(1) to F(0). This Psychromonas ingrahamii (strain DSM 17664 / CCUG 51855 / 37) protein is ATP synthase subunit b.